The following is a 553-amino-acid chain: Undecaprenyl phosphate-alpha-4-amino-4-deoxy-L-arabinose arabinosyl transferase (553 aa).

12 helical membrane-spanning segments follow: residues 8–28 (LLFS…RALW), 81–101 (FAVR…VYWL), 113–133 (LLSA…SYAV), 136–156 (PMVT…AQSA), 176–196 (LMTK…PWMI), 204–224 (LLLF…PWAI), 255–275 (APFW…VGLL), 289–309 (NSGS…FSLA), 313–333 (LPTY…HHGI), 351–371 (VAFG…WGLV), 384–404 (VLLG…CLVA), and 412–432 (AALC…DKVI).

Belongs to the glycosyltransferase 83 family.

The protein resides in the cell inner membrane. The enzyme catalyses 4-amino-4-deoxy-alpha-L-arabinopyranosyl di-trans,octa-cis-undecaprenyl phosphate + lipid IVA = lipid IIA + di-trans,octa-cis-undecaprenyl phosphate.. It functions in the pathway lipopolysaccharide metabolism; 4-amino-4-deoxy-beta-L-arabinose-lipid A biosynthesis. Its function is as follows. Catalyzes the transfer of the L-Ara4N moiety of the glycolipid undecaprenyl phosphate-alpha-L-Ara4N to lipid A. The modified arabinose is attached to lipid A and is required for resistance to polymyxin and cationic antimicrobial peptides. This is Undecaprenyl phosphate-alpha-4-amino-4-deoxy-L-arabinose arabinosyl transferase from Erwinia tasmaniensis (strain DSM 17950 / CFBP 7177 / CIP 109463 / NCPPB 4357 / Et1/99).